The chain runs to 562 residues: Arginine--tRNA ligase (562 aa).

The 'HIGH' region motif lies at 121 to 131 (PNIAKPISMGH).

It belongs to the class-I aminoacyl-tRNA synthetase family. In terms of assembly, monomer.

It is found in the cytoplasm. It catalyses the reaction tRNA(Arg) + L-arginine + ATP = L-arginyl-tRNA(Arg) + AMP + diphosphate. In Lactiplantibacillus plantarum (strain ATCC BAA-793 / NCIMB 8826 / WCFS1) (Lactobacillus plantarum), this protein is Arginine--tRNA ligase.